A 92-amino-acid chain; its full sequence is DNA/RNA-binding protein Alba (92 aa).

Residue Lys-11 is modified to N6-acetyllysine.

Belongs to the histone-like Alba family. In terms of processing, acetylated. Acetylation at Lys-11 decreases DNA-binding affinity.

It is found in the cytoplasm. Its subcellular location is the chromosome. In terms of biological role, binds double-stranded DNA tightly but without sequence specificity. Involved in DNA compaction. The polypeptide is DNA/RNA-binding protein Alba (Pyrobaculum neutrophilum (strain DSM 2338 / JCM 9278 / NBRC 100436 / V24Sta) (Thermoproteus neutrophilus)).